A 203-amino-acid chain; its full sequence is Small ribosomal subunit protein uS4 (203 aa).

One can recognise an S4 RNA-binding domain in the interval 93–153 (RRFDNVVFRA…PKSKNMSAVS (61 aa)).

Belongs to the universal ribosomal protein uS4 family. As to quaternary structure, part of the 30S ribosomal subunit. Contacts protein S5. The interaction surface between S4 and S5 is involved in control of translational fidelity.

In terms of biological role, one of the primary rRNA binding proteins, it binds directly to 16S rRNA where it nucleates assembly of the body of the 30S subunit. With S5 and S12 plays an important role in translational accuracy. In Chlorobium phaeovibrioides (strain DSM 265 / 1930) (Prosthecochloris vibrioformis (strain DSM 265)), this protein is Small ribosomal subunit protein uS4.